The chain runs to 397 residues: Probable transport protein MmpL6 (397 aa).

5 consecutive transmembrane segments (helical) span residues 190–210 (YDLLIAGIAALSLILLIMMII), 214–234 (LVAALVIVGTVALSLGASFGL), 242–262 (LLGIQLYWIVLALAVILLLAV), 293–313 (TGGVVTAAGLVFAATMSSFVF), and 328–348 (LGLLFDTLVVRAFMTPSIAVL).

Belongs to the resistance-nodulation-cell division (RND) (TC 2.A.6) family. MmpL subfamily.

The protein resides in the cell membrane. This chain is Probable transport protein MmpL6 (mmpL6), found in Mycobacterium tuberculosis (strain CDC 1551 / Oshkosh).